We begin with the raw amino-acid sequence, 224 residues long: 7-cyano-7-deazaguanine synthase (224 aa).

Residue 10–20 (LSGGLDSATVV) participates in ATP binding. 4 residues coordinate Zn(2+): C189, C199, C202, and C205.

Belongs to the QueC family. Zn(2+) serves as cofactor.

The enzyme catalyses 7-carboxy-7-deazaguanine + NH4(+) + ATP = 7-cyano-7-deazaguanine + ADP + phosphate + H2O + H(+). The protein operates within purine metabolism; 7-cyano-7-deazaguanine biosynthesis. Its function is as follows. Catalyzes the ATP-dependent conversion of 7-carboxy-7-deazaguanine (CDG) to 7-cyano-7-deazaguanine (preQ(0)). This is 7-cyano-7-deazaguanine synthase from Stutzerimonas stutzeri (strain A1501) (Pseudomonas stutzeri).